Reading from the N-terminus, the 321-residue chain is Urease accessory protein UreD (321 aa).

Belongs to the UreD family. UreD, UreF and UreG form a complex that acts as a GTP-hydrolysis-dependent molecular chaperone, activating the urease apoprotein by helping to assemble the nickel containing metallocenter of UreC. The UreE protein probably delivers the nickel.

Its subcellular location is the cytoplasm. Required for maturation of urease via the functional incorporation of the urease nickel metallocenter. The sequence is that of Urease accessory protein UreD from Photorhabdus laumondii subsp. laumondii (strain DSM 15139 / CIP 105565 / TT01) (Photorhabdus luminescens subsp. laumondii).